Reading from the N-terminus, the 422-residue chain is CinA-like protein (422 aa).

This sequence belongs to the CinA family.

The polypeptide is CinA-like protein (Mycolicibacterium vanbaalenii (strain DSM 7251 / JCM 13017 / BCRC 16820 / KCTC 9966 / NRRL B-24157 / PYR-1) (Mycobacterium vanbaalenii)).